A 294-amino-acid chain; its full sequence is Undecaprenyl-diphosphatase (294 aa).

Helical transmembrane passes span 2 to 22, 27 to 47, 65 to 85, 110 to 130, 135 to 155, 172 to 192, 215 to 235, 239 to 259, and 272 to 292; these read SMIY…SLIL, LVFS…PISS, VIAF…KIFW, LCIR…MIFY, LIFE…FLLV, ITYL…WPGF, FSFF…LYHY, IGLM…FIAL, and VSLI…YWGL.

It belongs to the UppP family.

It is found in the cell inner membrane. It catalyses the reaction di-trans,octa-cis-undecaprenyl diphosphate + H2O = di-trans,octa-cis-undecaprenyl phosphate + phosphate + H(+). Functionally, catalyzes the dephosphorylation of undecaprenyl diphosphate (UPP). Confers resistance to bacitracin. The polypeptide is Undecaprenyl-diphosphatase (Blochmanniella pennsylvanica (strain BPEN)).